The primary structure comprises 188 residues: Elongation factor P (188 aa).

This sequence belongs to the elongation factor P family.

The protein localises to the cytoplasm. Its pathway is protein biosynthesis; polypeptide chain elongation. Functionally, involved in peptide bond synthesis. Stimulates efficient translation and peptide-bond synthesis on native or reconstituted 70S ribosomes in vitro. Probably functions indirectly by altering the affinity of the ribosome for aminoacyl-tRNA, thus increasing their reactivity as acceptors for peptidyl transferase. The polypeptide is Elongation factor P (Anaplasma phagocytophilum (strain HZ)).